A 228-amino-acid chain; its full sequence is L-ribulose-5-phosphate 4-epimerase UlaF (228 aa).

Substrate-binding positions include 26–27, 43–44, and 72–73; these read GN, SG, and SS. 3 residues coordinate Zn(2+): Asp-74, His-93, and His-95. The active-site Proton donor/acceptor is Asp-118. His-167 contacts Zn(2+). Catalysis depends on Tyr-225, which acts as the Proton donor/acceptor.

The protein belongs to the aldolase class II family. AraD/FucA subfamily. The cofactor is Zn(2+).

The enzyme catalyses L-ribulose 5-phosphate = D-xylulose 5-phosphate. It participates in cofactor degradation; L-ascorbate degradation; D-xylulose 5-phosphate from L-ascorbate: step 4/4. Its function is as follows. Catalyzes the isomerization of L-ribulose 5-phosphate to D-xylulose 5-phosphate. Is involved in the anaerobic L-ascorbate utilization. In Salmonella paratyphi B (strain ATCC BAA-1250 / SPB7), this protein is L-ribulose-5-phosphate 4-epimerase UlaF.